Reading from the N-terminus, the 254-residue chain is 3-dehydroquinate dehydratase (254 aa).

3-dehydroquinate-binding positions include 47–49 (EFR) and arginine 83. Catalysis depends on histidine 144, which acts as the Proton donor/acceptor. Catalysis depends on lysine 171, which acts as the Schiff-base intermediate with substrate. 3-dehydroquinate is bound by residues arginine 213, serine 232, and glutamine 236.

It belongs to the type-I 3-dehydroquinase family. As to quaternary structure, homodimer.

The enzyme catalyses 3-dehydroquinate = 3-dehydroshikimate + H2O. Its pathway is metabolic intermediate biosynthesis; chorismate biosynthesis; chorismate from D-erythrose 4-phosphate and phosphoenolpyruvate: step 3/7. Its function is as follows. Involved in the third step of the chorismate pathway, which leads to the biosynthesis of aromatic amino acids. Catalyzes the cis-dehydration of 3-dehydroquinate (DHQ) and introduces the first double bond of the aromatic ring to yield 3-dehydroshikimate. This is 3-dehydroquinate dehydratase from Neisseria meningitidis serogroup A / serotype 4A (strain DSM 15465 / Z2491).